The sequence spans 504 residues: Glycerol kinase (504 aa).

T13 provides a ligand contact to ADP. Residues T13, T14, and S15 each coordinate ATP. Residue T13 participates in sn-glycerol 3-phosphate binding. R17 provides a ligand contact to ADP. Sn-glycerol 3-phosphate contacts are provided by R83, E84, and Y135. Residues R83, E84, and Y135 each coordinate glycerol. H231 is subject to Phosphohistidine; by HPr. D245 provides a ligand contact to sn-glycerol 3-phosphate. Positions 245 and 246 each coordinate glycerol. The ADP site is built by T267 and G310. Residues T267, G310, Q314, and G411 each coordinate ATP. G411 and N415 together coordinate ADP.

Belongs to the FGGY kinase family. In terms of assembly, homotetramer and homodimer (in equilibrium). The phosphoenolpyruvate-dependent sugar phosphotransferase system (PTS), including enzyme I, and histidine-containing protein (HPr) are required for the phosphorylation, which leads to the activation of the enzyme.

It catalyses the reaction glycerol + ATP = sn-glycerol 3-phosphate + ADP + H(+). It participates in polyol metabolism; glycerol degradation via glycerol kinase pathway; sn-glycerol 3-phosphate from glycerol: step 1/1. Its activity is regulated as follows. Activated by phosphorylation and inhibited by fructose 1,6-bisphosphate (FBP). In terms of biological role, key enzyme in the regulation of glycerol uptake and metabolism. Catalyzes the phosphorylation of glycerol to yield sn-glycerol 3-phosphate. The protein is Glycerol kinase of Ligilactobacillus salivarius (strain UCC118) (Lactobacillus salivarius).